The chain runs to 367 residues: Probable sugar phosphate/phosphate translocator At1g48230 (367 aa).

The next 10 membrane-spanning stretches (helical) occupy residues 9 to 29, 43 to 63, 76 to 96, 106 to 126, 140 to 160, 163 to 183, 193 to 213, 229 to 249, 257 to 276, and 280 to 302; these read LVLT…VILY, LPIT…FLLI, FEIY…SLWF, VAFI…MAVV, MVLV…FNVI, VYQV…QVLL, VTSL…PWYV, WIFF…FLVI, IRVA…TVIF, and TITG…YNYI. The segment covering 321-330 has biased composition (basic and acidic residues); sequence ITKDWKEKNS. A disordered region spans residues 321-341; it reads ITKDWKEKNSSDGGSPRGLEL.

It belongs to the TPT transporter family. TPT (TC 2.A.7.9) subfamily.

It is found in the membrane. This chain is Probable sugar phosphate/phosphate translocator At1g48230, found in Arabidopsis thaliana (Mouse-ear cress).